Here is a 291-residue protein sequence, read N- to C-terminus: Malectin (291 aa).

The signal sequence occupies residues 1-30 (MLRPRGAEGTAVALLRLLLLLLLLGPKLRG). The Lumenal portion of the chain corresponds to 31–268 (PGLGVVGAAG…TPNPYASDNS (238 aa)). Residues Tyr81, Tyr103, Tyr130, Phe131, and Asp200 each contribute to the a carbohydrate site. Positions 220–264 (LQPHPGLEKKEEEEEEEEYDEGSNLKRQTNKNRVQSGPRTPNPYA) are disordered. The segment covering 230–240 (EEEEEEEEYDE) has biased composition (acidic residues). A compositionally biased stretch (polar residues) spans 244-264 (LKRQTNKNRVQSGPRTPNPYA). The N-linked (GlcNAc...) asparagine glycan is linked to Asn267. Residues 269-289 (SLMFPILVAFGVFIPTLFCLC) form a helical membrane-spanning segment. Residues 290 to 291 (RL) lie on the Cytoplasmic side of the membrane.

It belongs to the malectin family. As to quaternary structure, interacts with the oligosaccharyltransferase (OST) complex.

The protein localises to the endoplasmic reticulum membrane. Carbohydrate-binding protein with a strong ligand preference for Glc2-N-glycan. May play a role in the early steps of protein N-glycosylation. The sequence is that of Malectin from Mus musculus (Mouse).